A 642-amino-acid polypeptide reads, in one-letter code: Threonine--tRNA ligase (642 aa).

One can recognise a TGS domain in the interval 1–61 (MPVITLPDGS…ETDAELSIIT (61 aa)). The catalytic stretch occupies residues 243-534 (DHRKIGKQLD…LIEEYAGRFP (292 aa)). Positions 334, 385, and 511 each coordinate Zn(2+).

The protein belongs to the class-II aminoacyl-tRNA synthetase family. As to quaternary structure, homodimer. Zn(2+) serves as cofactor.

Its subcellular location is the cytoplasm. It catalyses the reaction tRNA(Thr) + L-threonine + ATP = L-threonyl-tRNA(Thr) + AMP + diphosphate + H(+). In terms of biological role, catalyzes the attachment of threonine to tRNA(Thr) in a two-step reaction: L-threonine is first activated by ATP to form Thr-AMP and then transferred to the acceptor end of tRNA(Thr). Also edits incorrectly charged L-seryl-tRNA(Thr). The sequence is that of Threonine--tRNA ligase from Shewanella sp. (strain W3-18-1).